The primary structure comprises 124 residues: METVLYIAVFGALGCLSRYYLSGWVYELFGRAFPYGTFAVNIVGAFCIGLIMEFSLRSALVSPQLRIGLTIGFLGGLTTFSTFSYETFRLLEDGELLIASANVLFSVMTCLVFTWLGIIVAKAL.

4 helical membrane passes run 4–24 (VLYIAVFGALGCLSRYYLSGW), 32–52 (AFPYGTFAVNIVGAFCIGLIM), 67–87 (IGLTIGFLGGLTTFSTFSYET), and 101–121 (ANVLFSVMTCLVFTWLGIIVA). Na(+) is bound by residues G75 and T78.

Belongs to the fluoride channel Fluc/FEX (TC 1.A.43) family.

The protein resides in the cell inner membrane. It carries out the reaction fluoride(in) = fluoride(out). Na(+) is not transported, but it plays an essential structural role and its presence is essential for fluoride channel function. Its function is as follows. Fluoride-specific ion channel. Important for reducing fluoride concentration in the cell, thus reducing its toxicity. This chain is Fluoride-specific ion channel FluC, found in Geotalea uraniireducens (strain Rf4) (Geobacter uraniireducens).